Reading from the N-terminus, the 143-residue chain is Small ribosomal subunit protein bS6 (143 aa).

Residues 100 to 143 (QSFIMKSKDDKGDKPERRRRDDDESGDVGVSNDSDNDGGNAEAA) form a disordered region. Residues 105–121 (KSKDDKGDKPERRRRDD) are compositionally biased toward basic and acidic residues. Residues 126-143 (DVGVSNDSDNDGGNAEAA) are compositionally biased toward low complexity.

The protein belongs to the bacterial ribosomal protein bS6 family.

Binds together with bS18 to 16S ribosomal RNA. This is Small ribosomal subunit protein bS6 from Xylella fastidiosa (strain M12).